Consider the following 525-residue polypeptide: MRFFLSFFIIFISSVLFSFGIPNEILNFGSAIAGFSGLVLVYYALLNCGSHKRAAFLYGFFVSFVHLMSSFWLAFFEDFAIFTLGASTLAYFFIAMPFGFLLYHSLQKRENLRPFFFAAIWLLWEFAKSTGFLAYPWGTAPMICFNLKPFIQFVDITGVWGLSFIVPLIAACLGEALQTYAYSANSKAFFKGLTEIKSPLIFTAFLVLIINIYGITILSIEMKPATFLNTVIVQQNTDPWDNSQFEENIKTSQALSRKAIFSANKKPDLIVWSESSLIVPYKDNEDFYGILPYDDPFTRFLADTDTPIIVGSPYIDGKKQYNAAYLLSPEGKILDIYSKIQLVPFAEYIPFIDNPLVVRFFDKLVGFSSGWNPGTEYKVFGIKNSEGKTVNFTVPICFEDAFPAVCLNLHNAGSEVLINITNDSWSKTKSAEYQHFVVAHFRAIELRTTLVRSTNSGYSVVVDPKGKIISDMPLFEAESVYTEVPVYGHKKTFYASYKDWLPIMMFLILIFNIFLEKRRAKTARF.

The next 6 membrane-spanning stretches (helical) occupy residues 25–45 (ILNFGSAIAGFSGLVLVYYAL), 56–76 (FLYGFFVSFVHLMSSFWLAFF), 81–101 (IFTLGASTLAYFFIAMPFGFL), 115–135 (FFFAAIWLLWEFAKSTGFLAY), 153–173 (FVDITGVWGLSFIVPLIAACL), and 200–220 (LIFTAFLVLIINIYGITILSI). In terms of domain architecture, CN hydrolase spans 228–486 (LNTVIVQQNT…AESVYTEVPV (259 aa)). Glutamate 274 acts as the Proton acceptor in catalysis. Lysine 339 is an active-site residue. Cysteine 397 (nucleophile) is an active-site residue. Residues 495 to 515 (ASYKDWLPIMMFLILIFNIFL) traverse the membrane as a helical segment.

It belongs to the CN hydrolase family. Apolipoprotein N-acyltransferase subfamily.

It is found in the cell inner membrane. The catalysed reaction is N-terminal S-1,2-diacyl-sn-glyceryl-L-cysteinyl-[lipoprotein] + a glycerophospholipid = N-acyl-S-1,2-diacyl-sn-glyceryl-L-cysteinyl-[lipoprotein] + a 2-acyl-sn-glycero-3-phospholipid + H(+). It participates in protein modification; lipoprotein biosynthesis (N-acyl transfer). In terms of biological role, catalyzes the phospholipid dependent N-acylation of the N-terminal cysteine of apolipoprotein, the last step in lipoprotein maturation. The chain is Apolipoprotein N-acyltransferase 2 from Treponema denticola (strain ATCC 35405 / DSM 14222 / CIP 103919 / JCM 8153 / KCTC 15104).